The chain runs to 230 residues: Cyclin-dependent kinase inhibitor rum1 (230 aa).

3 disordered regions span residues 1–25, 43–118, and 188–230; these read MEPS…SFKG, PESD…DGLY, and SRVP…NLLR. T13 carries the post-translational modification Phosphothreonine; by MAPK. S19 is subject to Phosphoserine; by MAPK. Residues T58 and T62 each carry the phosphothreonine; by cdc2 modification. Residues 67-147 form a CDK inhibitory and cyclin-binding region; the sequence is LLPNLMLQDR…TFKPKLLFAD (81 aa). A compositionally biased stretch (basic and acidic residues) spans 78–91; sequence NSLERCMEEDREHN. Residues 93–102 show a composition bias toward polar residues; it reads FLSSSDNQLL. The tract at residues 101-230 is required for activity as a cdc2 kinase inhibitor; sequence LLSRKKRKPT…KDENRHNLLR (130 aa). Residues 188–199 are compositionally biased toward low complexity; it reads SRVPSSSSGSFV. Positions 219–230 are enriched in basic and acidic residues; it reads NTKDENRHNLLR.

In terms of assembly, interacts with cdc13, cig2 and pop1. In terms of processing, phosphorylated by cig1-associated cdc2 which leads to increased stability. Phosphorylation by MAPK reduces cdc2 kinase inhibitor ability.

Its subcellular location is the nucleus. Its function is as follows. Regulator of cell cycle G1 phase progression. Ensures the correct sequence of S phase and mitosis in the cell by acting as an inhibitor of the cdc2 mitotic kinase. Probably interacts with cdc2 to inhibit its action until the cell mass for Start is reached. Determines the length of the pre-Start G1 period and prevents mitosis from happening in early G1 cells. Required for maintaining pheromone-induced G1 arrest. Acts as an adapter protein since interaction with cdc13 promotes cyclin proteolysis during G1. Becomes a target for degradation at the G1/S phase transition, following phosphorylation by cig1-associated cdc2 at the G1/S phase transition. This Schizosaccharomyces pombe (strain 972 / ATCC 24843) (Fission yeast) protein is Cyclin-dependent kinase inhibitor rum1 (rum1).